We begin with the raw amino-acid sequence, 330 residues long: tRNA-modifying protein YgfZ (330 aa).

The folate site is built by Trp28 and Trp190.

This sequence belongs to the tRNA-modifying YgfZ family.

The protein localises to the cytoplasm. Functionally, folate-binding protein involved in regulating the level of ATP-DnaA and in the modification of some tRNAs. It is probably a key factor in regulatory networks that act via tRNA modification, such as initiation of chromosomal replication. This is tRNA-modifying protein YgfZ from Yersinia pseudotuberculosis serotype O:1b (strain IP 31758).